The following is a 196-amino-acid chain: Large ribosomal subunit protein eL15 (196 aa).

Residues 159-196 form a disordered region; that stretch reads RAYRGRTSAGQRGRGQQKRGKGTEHTRPSIRANDKRGK. Over residues 179–196 the composition is skewed to basic and acidic residues; it reads KGTEHTRPSIRANDKRGK.

Belongs to the eukaryotic ribosomal protein eL15 family.

The sequence is that of Large ribosomal subunit protein eL15 from Natronomonas pharaonis (strain ATCC 35678 / DSM 2160 / CIP 103997 / JCM 8858 / NBRC 14720 / NCIMB 2260 / Gabara) (Halobacterium pharaonis).